The following is a 256-amino-acid chain: Thiazole synthase (256 aa).

The Schiff-base intermediate with DXP role is filled by Lys-96. Residues Gly-157, 183–184, and 205–206 each bind 1-deoxy-D-xylulose 5-phosphate; these read AG and NT.

The protein belongs to the ThiG family. In terms of assembly, homotetramer. Forms heterodimers with either ThiH or ThiS.

It localises to the cytoplasm. It carries out the reaction [ThiS sulfur-carrier protein]-C-terminal-Gly-aminoethanethioate + 2-iminoacetate + 1-deoxy-D-xylulose 5-phosphate = [ThiS sulfur-carrier protein]-C-terminal Gly-Gly + 2-[(2R,5Z)-2-carboxy-4-methylthiazol-5(2H)-ylidene]ethyl phosphate + 2 H2O + H(+). Its pathway is cofactor biosynthesis; thiamine diphosphate biosynthesis. Catalyzes the rearrangement of 1-deoxy-D-xylulose 5-phosphate (DXP) to produce the thiazole phosphate moiety of thiamine. Sulfur is provided by the thiocarboxylate moiety of the carrier protein ThiS. In vitro, sulfur can be provided by H(2)S. In Bacillus cereus (strain AH187), this protein is Thiazole synthase.